We begin with the raw amino-acid sequence, 1339 residues long: DNA-directed RNA polymerase subunit beta'' (1339 aa).

Residues Cys-226, Cys-299, Cys-306, and Cys-309 each coordinate Zn(2+).

Belongs to the RNA polymerase beta' chain family. RpoC2 subfamily. As to quaternary structure, in plastids the minimal PEP RNA polymerase catalytic core is composed of four subunits: alpha, beta, beta', and beta''. When a (nuclear-encoded) sigma factor is associated with the core the holoenzyme is formed, which can initiate transcription. The cofactor is Zn(2+).

The protein resides in the plastid. The protein localises to the chloroplast. The enzyme catalyses RNA(n) + a ribonucleoside 5'-triphosphate = RNA(n+1) + diphosphate. Its function is as follows. DNA-dependent RNA polymerase catalyzes the transcription of DNA into RNA using the four ribonucleoside triphosphates as substrates. The sequence is that of DNA-directed RNA polymerase subunit beta'' from Cycas taitungensis (Prince sago).